We begin with the raw amino-acid sequence, 385 residues long: 28S rRNA (uridine-N(3))-methyltransferase (385 aa).

Disordered stretches follow at residues 1-35 (MAER…KKKW) and 47-72 (QRAQ…NQGR). 2 stretches are compositionally biased toward basic and acidic residues: residues 15-35 (HGQR…KKKW) and 47-58 (QRAQEEEAKRQE). S-adenosyl-L-methionine-binding residues include Arg293, Gly313, Asn342, and Thr343.

The protein belongs to the class IV-like SAM-binding methyltransferase superfamily. Interacts with INCA1.

It localises to the cytoplasm. The protein localises to the cytoskeleton. Its subcellular location is the spindle. The protein resides in the chromosome. It is found in the centromere. It localises to the kinetochore. The protein localises to the microtubule organizing center. Its subcellular location is the centrosome. The catalysed reaction is uridine in 28S rRNA + S-adenosyl-L-methionine = N(3)-methyluridine in 28S rRNA + S-adenosyl-L-homocysteine + H(+). Functionally, S-adenosyl-L-methionine-dependent methyltransferase that specifically methylates the N3 position of a uridine in 28S rRNA. Required for association of the centrosomes with the poles of the bipolar mitotic spindle during metaphase. Also involved in chromosome alignment. May promote centrosome maturation probably by recruiting A-kinase anchor protein AKAP9 to centrosomes in early mitosis. Binds specifically to miRNA MIR145 hairpin, regulates MIR145 expression at a postranscriptional level. This is 28S rRNA (uridine-N(3))-methyltransferase from Mus musculus (Mouse).